We begin with the raw amino-acid sequence, 649 residues long: Protein PSK SIMULATOR 3 (649 aa).

Gly2 carries N-myristoyl glycine lipidation. The tract at residues 18–43 is disordered; sequence SGSSVADDGREPDFGHSQPNGQTSLI.

It is found in the nucleus. Its function is as follows. Promotes plant growth, especially at the vegetative stage, probably via the regulation of phytosulfokine (PSK) signaling; PSK are peptide phytohormones acting as growth factors. Together with PSI2 and PSI3, required during vegetative growth and reproduction. May also have a function in carbohydrate metabolism. The chain is Protein PSK SIMULATOR 3 from Arabidopsis thaliana (Mouse-ear cress).